Here is a 339-residue protein sequence, read N- to C-terminus: D-alanine--D-alanine ligase (339 aa).

The ATP-grasp domain maps to 126-333 (KQVLDSAGIP…YSELVTRLVE (208 aa)). 158-213 (AAELGYPLFVKPANLGSSVGISKVGSPEELDAALTLAFGLDRRVILEAMTPHKPRE) contacts ATP. Mg(2+)-binding residues include aspartate 286, glutamate 300, and asparagine 302.

The protein belongs to the D-alanine--D-alanine ligase family. It depends on Mg(2+) as a cofactor. The cofactor is Mn(2+).

It is found in the cytoplasm. It catalyses the reaction 2 D-alanine + ATP = D-alanyl-D-alanine + ADP + phosphate + H(+). The protein operates within cell wall biogenesis; peptidoglycan biosynthesis. Functionally, cell wall formation. The sequence is that of D-alanine--D-alanine ligase from Deinococcus radiodurans (strain ATCC 13939 / DSM 20539 / JCM 16871 / CCUG 27074 / LMG 4051 / NBRC 15346 / NCIMB 9279 / VKM B-1422 / R1).